A 219-amino-acid polypeptide reads, in one-letter code: Type-5 uracil-DNA glycosylase (219 aa).

The [4Fe-4S] cluster site is built by C13, C16, C115, and C130.

Belongs to the uracil-DNA glycosylase (UDG) superfamily. Type 5 (UDGb) family.

Its function is as follows. DNA glycosylase with broad substrate specificity. Can remove uracil from double-stranded DNA containing either a U/G, U/A, U/C or U/T base pair. Can also excise hypoxanthine from double-stranded DNA containing G/I, T/I, and A/I base pairs, xanthine from both double-stranded and single stranded DNA, thymine from G/T mismatched DNA, 5'-hydroxymethyluracil and 5'-fluorouracil. This chain is Type-5 uracil-DNA glycosylase, found in Thermus thermophilus (strain ATCC 27634 / DSM 579 / HB8).